The primary structure comprises 486 residues: Glutamyl-tRNA(Gln) amidotransferase subunit A (486 aa).

Residues Lys78 and Ser153 each act as charge relay system in the active site. The active-site Acyl-ester intermediate is Ser177.

It belongs to the amidase family. GatA subfamily. As to quaternary structure, heterotrimer of A, B and C subunits.

It carries out the reaction L-glutamyl-tRNA(Gln) + L-glutamine + ATP + H2O = L-glutaminyl-tRNA(Gln) + L-glutamate + ADP + phosphate + H(+). Allows the formation of correctly charged Gln-tRNA(Gln) through the transamidation of misacylated Glu-tRNA(Gln) in organisms which lack glutaminyl-tRNA synthetase. The reaction takes place in the presence of glutamine and ATP through an activated gamma-phospho-Glu-tRNA(Gln). The chain is Glutamyl-tRNA(Gln) amidotransferase subunit A from Ruminiclostridium cellulolyticum (strain ATCC 35319 / DSM 5812 / JCM 6584 / H10) (Clostridium cellulolyticum).